A 349-amino-acid polypeptide reads, in one-letter code: tRNA pseudouridine synthase D (349 aa).

Residue Phe-26 coordinates substrate. Residue Asp-79 is the Nucleophile of the active site. A substrate-binding site is contributed by Asn-128. Residues 154–302 (GVPNYFGSQR…VEGARRAILL (149 aa)) form the TRUD domain. Phe-328 is a substrate binding site.

The protein belongs to the pseudouridine synthase TruD family.

It catalyses the reaction uridine(13) in tRNA = pseudouridine(13) in tRNA. Functionally, responsible for synthesis of pseudouridine from uracil-13 in transfer RNAs. This Yersinia enterocolitica serotype O:8 / biotype 1B (strain NCTC 13174 / 8081) protein is tRNA pseudouridine synthase D.